Reading from the N-terminus, the 351-residue chain is tRNA pseudouridine synthase D (351 aa).

Asp81 serves as the catalytic Nucleophile. The region spanning 158-304 (GVPNYFGSQR…MRHERRAIEL (147 aa)) is the TRUD domain.

Belongs to the pseudouridine synthase TruD family.

It carries out the reaction uridine(13) in tRNA = pseudouridine(13) in tRNA. In terms of biological role, responsible for synthesis of pseudouridine from uracil-13 in transfer RNAs. The sequence is that of tRNA pseudouridine synthase D from Aliivibrio fischeri (strain ATCC 700601 / ES114) (Vibrio fischeri).